The chain runs to 545 residues: MLAARLIILLSFYWLSASAIDPADPLFVDLPHGKIRGRDNGFYYSYESLPYAEPPVGELRFEAPQPYKQQWTDTFDATQPPVTCMQWNQFIFGDNKLAGVEDCLTVSIYKPKNTSQSSFPVVAHMHGGAFMFGEARQNGHENMMREGKLILVKISYRLGPLGFASTGDAGLSGNFGLKDQRLALLWIKQNIASFGGEPENIIVVGHSAGGASVHLQMLREDFAQVAKAGISFGGNAMDPWVIHQSARGRTFELGRIVGCGQASDSTELKNCLKSKPAGEIVSAVHSFLVFAYVPFAPFGPVVESPDAPEAFISQHPVDIIKSGKFAQVPWAVTYNTEDGGYNAAVLLEKQASSGRELIFDLNDHWFDWAPYLLFYRDSMTTIKDMDDYSRKLRQEYLGDRRFSVESYWDLQRLFTDILYKNATELALDLYRKHGKSPVYAFVYDNPANTGIGQFFSKRTDVHFGTVHGDEYFLIFENLARGPEMRSDEEIISRNFLNMINDFVVSGNGTMTFGNCVLQDNVGSNKFQLLSITKNGCENLQLESFP.

The signal sequence occupies residues 1–19; it reads MLAARLIILLSFYWLSASA. Cysteines 84 and 103 form a disulfide. Residue Asn-113 is glycosylated (N-linked (GlcNAc...) asparagine). Ser-207 functions as the Acyl-ester intermediate in the catalytic mechanism. Cys-259 and Cys-271 form a disulfide bridge. A glycan (N-linked (GlcNAc...) asparagine) is linked at Asn-421. His-467 (charge relay system) is an active-site residue. An N-linked (GlcNAc...) asparagine glycan is attached at Asn-507. Residues Cys-515 and Cys-536 are joined by a disulfide bond.

This sequence belongs to the type-B carboxylesterase/lipase family.

It localises to the secreted. It carries out the reaction a carboxylic ester + H2O = an alcohol + a carboxylate + H(+). This is Esterase-5C (Est-5C) from Drosophila persimilis (Fruit fly).